Reading from the N-terminus, the 190-residue chain is E3 ubiquitin-protein ligase RNF4 (190 aa).

Residues 1–16 are required for ubiquitination activity; the sequence is MSTRKRRGGAINSRQA. The segment at 1 to 29 is disordered; sequence MSTRKRRGGAINSRQAQKRTREATSTPEI. Residues 4–61 form a mediates interaction with TRPS1 region; the sequence is RKRRGGAINSRQAQKRTREATSTPEISLEAEPIELVETAGDEIVDLTCESLEPVVVDL. 4 short sequence motifs (SUMO interaction motif) span residues 36 to 39, 46 to 49, 57 to 59, and 67 to 70; these read IELV, IVDL, VVV, and VVIV. Phosphoserine is present on residues Ser94 and Ser95. Cys132, Cys135, Cys154, His156, Cys159, Cys162, Cys173, and Cys176 together coordinate Zn(2+). The segment at 132 to 177 adopts an RING-type zinc-finger fold; that stretch reads CPICMDGYSEIVQNGRLIVSTECGHVFCSQCLRDSLKNANTCPTCR.

Homodimer (via RING-type zinc finger domain). Interacts with GSC2. Interacts with AR/the androgen receptor and TBP. Interacts with TCF20. Interacts with PATZ1. Interacts with TRPS1; negatively regulates TRPS1 transcriptional repressor activity. Interacts with PML (isoform PML-1, isoform PML-2, isoform PML-3, isoform PML-4, isoform PML-5 and isoform PML-6). Interacts with PRDM1/Blimp-1. Sumoylated; conjugated by one or two SUMO1 moieties. In terms of processing, autoubiquitinated. Widely expressed at low levels in many tissues; highly expressed in testis.

The protein resides in the cytoplasm. Its subcellular location is the nucleus. It localises to the PML body. The catalysed reaction is S-ubiquitinyl-[E2 ubiquitin-conjugating enzyme]-L-cysteine + [acceptor protein]-L-lysine = [E2 ubiquitin-conjugating enzyme]-L-cysteine + N(6)-ubiquitinyl-[acceptor protein]-L-lysine.. It functions in the pathway protein modification; protein ubiquitination. In terms of biological role, E3 ubiquitin-protein ligase which binds polysumoylated chains covalently attached to proteins and mediates 'Lys-6'-, 'Lys-11'-, 'Lys-48'- and 'Lys-63'-linked polyubiquitination of those substrates and their subsequent targeting to the proteasome for degradation. Regulates the degradation of several proteins including PML and the transcriptional activator PEA3. Involved in chromosome alignment and spindle assembly, it regulates the kinetochore CENPH-CENPI-CENPK complex by targeting polysumoylated CENPI to proteasomal degradation. Regulates the cellular responses to hypoxia and heat shock through degradation of respectively EPAS1 and PARP1. Alternatively, it may also bind DNA/nucleosomes and have a more direct role in the regulation of transcription for instance enhancing basal transcription and steroid receptor-mediated transcriptional activation. Catalyzes ubiquitination of sumoylated PARP1 in response to PARP1 trapping to chromatin, leading to PARP1 removal from chromatin by VCP/p97. This is E3 ubiquitin-protein ligase RNF4 from Homo sapiens (Human).